The chain runs to 77 residues: uncharacterized protein (77 aa).

One can recognise an Inhibitor I9 domain in the interval 5-74 (SYIVQLKDSV…FEPDQEMHTM (70 aa)).

It belongs to the protease inhibitor I9 family.

It localises to the cytoplasm. Its subcellular location is the nucleus. This is an uncharacterized protein from Schizosaccharomyces pombe (strain 972 / ATCC 24843) (Fission yeast).